We begin with the raw amino-acid sequence, 178 residues long: Redox-sensing transcriptional repressor Rex (178 aa).

59 to 64 contacts NAD(+); sequence GVGNMG.

It belongs to the transcriptional regulatory Rex family. Homodimer.

It is found in the cytoplasm. Modulates transcription in response to changes in cellular NADH/NAD(+) redox state. The polypeptide is Redox-sensing transcriptional repressor Rex (Streptococcus suis).